The chain runs to 125 residues: Ribosome-binding factor A (125 aa).

This sequence belongs to the RbfA family. In terms of assembly, monomer. Binds 30S ribosomal subunits, but not 50S ribosomal subunits or 70S ribosomes.

The protein localises to the cytoplasm. Functionally, one of several proteins that assist in the late maturation steps of the functional core of the 30S ribosomal subunit. Associates with free 30S ribosomal subunits (but not with 30S subunits that are part of 70S ribosomes or polysomes). Required for efficient processing of 16S rRNA. May interact with the 5'-terminal helix region of 16S rRNA. This chain is Ribosome-binding factor A, found in Methylobacillus flagellatus (strain ATCC 51484 / DSM 6875 / VKM B-1610 / KT).